The chain runs to 160 residues: CXXC motif containing zinc binding protein (160 aa).

Zn(2+)-binding residues include Cys33, Cys36, Cys67, and Cys70. Ser75 carries the post-translational modification Phosphoserine.

Belongs to the UPF0587 family. As to quaternary structure, monomer.

This Homo sapiens (Human) protein is CXXC motif containing zinc binding protein.